Consider the following 772-residue polypeptide: MKKIIFLVLFLIFIFKDIKSSYGVDLVNFKMITLLSNNFNDLGFNNMLNQGKVNVEKQLGITDTKVYIVDGYNDTKALLLPMVQNEDVDFVMCTSLGHVEACKEIAKMYEGSLTIKTQFMVRGSSNATSNLLQVTYNYASINYISGVFAGLYTKTNKIGFLSPGLLGGSADCFVYAYWLGAKQINPKIEFYYYNIGAFLNSDKTTRATAELLDMGCDVIGDTLDDFSAGNTVISRGFKALGTNGFPQREVYGENVVFSYSYNWTKIFLPIVKNALVKGKPKNNYADFNIDPTLNFYDISYGFDVPQDTKTKINDTISYLKSTPRAIHPTNCNDLMLKYAEKWNLTMSTTYDRTKCIAGSNFFFINEPFPGMTYFGYYNITNTQVKFSPSIQIGVSIVSGVLIAIVLLSMVGVYKYRASSSIRSASPIFLIFILFGALIVFGGIILWVSELNDHVCNGRLWMVTLGFSTLIGSLVVKNFRIWLIFDNPELKTVKITNYQLYPWVACCLVINIILMSILTSLGDLREVDATGIDSLGKYEFLKICKMNNSGASVLYTILAYFGALLLTGVFVSWKIRIVDIEEFNESRAIAHTLYAISFCLFVIVPLMISPLEKQSETIILSVAGLFITTAAVLIIFLPKFYRVYEYGEEGTNEMFKSKKSSNIATARAESHKSSNSGNHRTNRRGNLVSGDFTDDSESSVIEPNQEVADVTSGAVLADFTEESVSEIDENEKNHNDEIELPEINQSEQQNSEIEQPPPPPPPQQIEPDEKNQD.

A signal peptide spans 1–23 (MKKIIFLVLFLIFIFKDIKSSYG). The Extracellular portion of the chain corresponds to 24–391 (VDLVNFKMIT…TQVKFSPSIQ (368 aa)). N-linked (GlcNAc...) asparagine glycosylation is found at Asn-73, Asn-126, Asn-262, Asn-313, Asn-343, and Asn-378. Residues 392–412 (IGVSIVSGVLIAIVLLSMVGV) traverse the membrane as a helical segment. Residues 413 to 426 (YKYRASSSIRSASP) lie on the Cytoplasmic side of the membrane. A helical transmembrane segment spans residues 427 to 447 (IFLIFILFGALIVFGGIILWV). The Extracellular segment spans residues 448–463 (SELNDHVCNGRLWMVT). The chain crosses the membrane as a helical span at residues 464 to 484 (LGFSTLIGSLVVKNFRIWLIF). The Cytoplasmic segment spans residues 485-500 (DNPELKTVKITNYQLY). A helical transmembrane segment spans residues 501–521 (PWVACCLVINIILMSILTSLG). The Extracellular segment spans residues 522 to 551 (DLREVDATGIDSLGKYEFLKICKMNNSGAS). N-linked (GlcNAc...) asparagine glycosylation occurs at Asn-546. A helical transmembrane segment spans residues 552 to 572 (VLYTILAYFGALLLTGVFVSW). Residues 573 to 586 (KIRIVDIEEFNESR) lie on the Cytoplasmic side of the membrane. Residues 587–607 (AIAHTLYAISFCLFVIVPLMI) form a helical membrane-spanning segment. The Extracellular segment spans residues 608-616 (SPLEKQSET). A helical transmembrane segment spans residues 617–637 (IILSVAGLFITTAAVLIIFLP). The Cytoplasmic segment spans residues 638–772 (KFYRVYEYGE…QIEPDEKNQD (135 aa)). Positions 664 to 772 (TARAESHKSS…QIEPDEKNQD (109 aa)) are disordered. The span at 718–728 (FTEESVSEIDE) shows a compositional bias: acidic residues. Positions 740–753 (PEINQSEQQNSEIE) are enriched in low complexity. Pro residues predominate over residues 754–763 (QPPPPPPPQQ).

The protein in the N-terminal section; belongs to the BMP lipoprotein family. It in the C-terminal section; belongs to the G-protein coupled receptor 3 family. GABA-B receptor subfamily.

Its subcellular location is the membrane. In Dictyostelium discoideum (Social amoeba), this protein is Metabotropic glutamate receptor-like protein G (grlG).